The chain runs to 256 residues: tRNA pseudouridine synthase A (256 aa).

Asp-52 acts as the Nucleophile in catalysis. Position 110 (Tyr-110) interacts with substrate.

Belongs to the tRNA pseudouridine synthase TruA family. As to quaternary structure, homodimer.

It catalyses the reaction uridine(38/39/40) in tRNA = pseudouridine(38/39/40) in tRNA. Its function is as follows. Formation of pseudouridine at positions 38, 39 and 40 in the anticodon stem and loop of transfer RNAs. This chain is tRNA pseudouridine synthase A, found in Stenotrophomonas maltophilia (strain R551-3).